Consider the following 154-residue polypeptide: Spermatogenesis-associated protein 19, mitochondrial (154 aa).

Residues 1–24 (MIITTWIMYILARKSIGLPFPPRV) constitute a mitochondrion transit peptide. Phosphoserine occurs at positions 26 and 116.

In terms of tissue distribution, expressed in the testis.

The protein resides in the mitochondrion outer membrane. Its subcellular location is the mitochondrion. It localises to the cell projection. The protein localises to the cilium. It is found in the flagellum. In terms of biological role, essential for sperm motility and male fertility. Plays an important role in sperm motility by regulating the organization and function of the mitochondria and is also required for correct sperm midpiece assembly. This Rattus norvegicus (Rat) protein is Spermatogenesis-associated protein 19, mitochondrial (Spata19).